A 267-amino-acid chain; its full sequence is Sepiapterin reductase (267 aa).

M1 carries the post-translational modification N-acetylmethionine. NADP(+) is bound at residue 20–26 (GASRGFG). Phosphoserine is present on S38. Residues 48 to 49 (RN) and 75 to 76 (DL) each bind NADP(+). Substrate contacts are provided by residues 163 to 164 (SI) and Y176. K180 provides a ligand contact to NADP(+). Position 201 is a phosphoserine (S201). G205 serves as a coordination point for substrate. Residue 207-212 (LDTDMQ) participates in NADP(+) binding. Phosphoserine is present on S219. A substrate-binding site is contributed by D263.

This sequence belongs to the sepiapterin reductase family. As to quaternary structure, homodimer.

It is found in the cytoplasm. It catalyses the reaction L-erythro-7,8-dihydrobiopterin + NADP(+) = L-sepiapterin + NADPH + H(+). The enzyme catalyses (6R)-L-erythro-5,6,7,8-tetrahydrobiopterin + 2 NADP(+) = 6-pyruvoyl-5,6,7,8-tetrahydropterin + 2 NADPH + 2 H(+). Catalyzes the final one or two reductions in tetra-hydrobiopterin biosynthesis to form 5,6,7,8-tetrahydrobiopterin. This Bos taurus (Bovine) protein is Sepiapterin reductase (SPR).